A 127-amino-acid chain; its full sequence is Large ribosomal subunit protein bL12 (127 aa).

The segment at 96–127 is disordered; that stretch reads GTPSTLKEAVSKDDAEEAAKQLKEAGAEVEVK. Over residues 104–127 the composition is skewed to basic and acidic residues; it reads AVSKDDAEEAAKQLKEAGAEVEVK.

The protein belongs to the bacterial ribosomal protein bL12 family. Homodimer. Part of the ribosomal stalk of the 50S ribosomal subunit. Forms a multimeric L10(L12)X complex, where L10 forms an elongated spine to which 2 to 4 L12 dimers bind in a sequential fashion. Binds GTP-bound translation factors.

Functionally, forms part of the ribosomal stalk which helps the ribosome interact with GTP-bound translation factors. Is thus essential for accurate translation. The polypeptide is Large ribosomal subunit protein bL12 (Oleidesulfovibrio alaskensis (strain ATCC BAA-1058 / DSM 17464 / G20) (Desulfovibrio alaskensis)).